A 231-amino-acid chain; its full sequence is MSLKIPEHVAIIMDGNGRWARKRGLPRIAGHYKGAEVAEDIVEFAIELGIKHLTLFAFSTENWNRPKGEVEALFELLRRYLQTKKDKLYKLGIRVRFIGRRDRINKELVKLMQEIEEESKKFKNLFLNLAVDYGGRDDILRAVKKAVKLQREEITEELFSSLLDLSCSPDPDLLIRTAGEKRISNFLLWNLAYTELYFSETLWPDFSREEFLKALEDFSRRKRKFGRVLDE.

Aspartate 14 is a catalytic residue. Aspartate 14 lines the Mg(2+) pocket. Residues 15 to 18, tryptophan 19, arginine 27, histidine 31, and 59 to 61 each bind substrate; these read GNGR and STE. Asparagine 62 (proton acceptor) is an active-site residue. Substrate-binding positions include tryptophan 63, arginine 65, arginine 176, and 182–184; that span reads RIS. Glutamate 195 contacts Mg(2+).

It belongs to the UPP synthase family. As to quaternary structure, homodimer. Mg(2+) serves as cofactor.

Its function is as follows. Catalyzes the condensation of isopentenyl diphosphate (IPP) with allylic pyrophosphates generating different type of terpenoids. The polypeptide is Isoprenyl transferase (Aquifex pyrophilus).